Reading from the N-terminus, the 553-residue chain is Terpene synthase 16 (553 aa).

Mg(2+) contacts are provided by Asp-303, Asp-307, and Glu-457. The short motif at 303 to 307 is the DDXXD motif element; sequence DDTYD.

The protein belongs to the terpene synthase family. Tpsa subfamily. The cofactor is Mg(2+). Mn(2+) serves as cofactor. As to expression, expressed in leaves, trichomes and flowers.

It functions in the pathway secondary metabolite biosynthesis; terpenoid biosynthesis. Functionally, sesquiterpene synthase involved in the biosynthesis of volatile compounds. No activity detected with geranyl diphosphate (GPP) and farnesyl diphosphate (FPP) as substrates. This Solanum lycopersicum (Tomato) protein is Terpene synthase 16.